A 147-amino-acid chain; its full sequence is Hemoglobin subunit beta (147 aa).

Val2 is subject to N-acetylvaline. The region spanning His3 to His147 is the Globin domain. Ser45 is subject to Phosphoserine. Lys60 carries the post-translational modification N6-acetyllysine. Position 64 (His64) interacts with heme b. N6-acetyllysine is present on Lys83. His93 contacts heme b. Cys94 is modified (S-nitrosocysteine). Position 145 is an N6-acetyllysine (Lys145).

Belongs to the globin family. As to quaternary structure, heterotetramer of two alpha chains and two beta chains. As to expression, red blood cells.

Its function is as follows. Involved in oxygen transport from the lung to the various peripheral tissues. The protein is Hemoglobin subunit beta (HBB) of Sus scrofa (Pig).